The following is a 194-amino-acid chain: Glycerol-3-phosphate acyltransferase (194 aa).

A run of 5 helical transmembrane segments spans residues 7-27 (LLMA…YWVC), 59-79 (LTLF…AMLG), 86-106 (GVTA…HFKG), 116-136 (AGLA…AAVV), and 157-177 (AWRL…FILI).

Belongs to the PlsY family. Probably interacts with PlsX.

Its subcellular location is the cell inner membrane. The enzyme catalyses an acyl phosphate + sn-glycerol 3-phosphate = a 1-acyl-sn-glycero-3-phosphate + phosphate. It participates in lipid metabolism; phospholipid metabolism. In terms of biological role, catalyzes the transfer of an acyl group from acyl-phosphate (acyl-PO(4)) to glycerol-3-phosphate (G3P) to form lysophosphatidic acid (LPA). This enzyme utilizes acyl-phosphate as fatty acyl donor, but not acyl-CoA or acyl-ACP. The protein is Glycerol-3-phosphate acyltransferase of Hahella chejuensis (strain KCTC 2396).